The chain runs to 113 residues: MSNLENARCEACHADAPQVSDEELKELMREIPDWTPVTNDNVMMLQREFKFKNFKQALAFTNRVGDLAEEEKHHPELVTEWGKVTVTWWTHAINGLHKNDFIMAAKTDSVVDA.

It belongs to the pterin-4-alpha-carbinolamine dehydratase family.

The catalysed reaction is (4aS,6R)-4a-hydroxy-L-erythro-5,6,7,8-tetrahydrobiopterin = (6R)-L-erythro-6,7-dihydrobiopterin + H2O. The chain is Putative pterin-4-alpha-carbinolamine dehydratase from Idiomarina loihiensis (strain ATCC BAA-735 / DSM 15497 / L2-TR).